The chain runs to 615 residues: MAQKKYLQAKLTQFLREDRIQLWKPPYTDENKKVGLALKDLAKQYSDRLECCENEVEKVIEEIRCKAIERGTGNDNYRTTGIATIEVFLPPRLKKDRKNLLETRLHITGRELRSKIAETFGLQENYIKIVINKKQLQLGKTLEEQGVAHNVKAMVLELKQSEEDARKNFQLEEEEQNEAKLKEKQIQRTKRGLEILAKRAAETVVDPEMTPYLDIANQTGRSIRIPPSERKALMLAMGYHEKGRAFLKRKEYGIALPCLLDADKYFCECCRELLDTVDNYAVLQLDIVWCYFRLEQLECLDDAEKKLNLAQKCFKNCYGENHQRLVHIKGNCGKEKVLFLRLYLLQGIRNYHSGNDVEAYEYLNKARQLFKELYIDPSKVDNLLQLGFTAQEARLGLRACDGNVDHAATHITNRREELAQIRKEEKEKKRRRLENIRFLKGMGYSTHAAQQVLHAASGNLDEALKILLSNPQMWWLNDSNPETDNRQESPSQENIDRLVYMGFDALVAEAALRVFRGNVQLAAQTLAHNGGSLPPELPLSPEDSLSPPATSPSDSAGTSSASTDEDMETEAVNEILEDIPEHEEDYLDSTLEDEEIIIAEYLSYVENRKSATKKN.

Coiled coils occupy residues 36 to 70 (LALK…AIER) and 152 to 203 (KAMV…AAET). 3 UBA domains span residues 374-413 (YIDP…HITN), 424-470 (EEKE…LLSN), and 489-529 (SPSQ…LAHN). A Nuclear localization signal motif is present at residues 414–431 (RREELAQIRKEEKEKKRR). An NEDD8-binding 1 region spans residues 427-474 (EKKRRRLENIRFLKGMGYSTHAAQQVLHAASGNLDEALKILLSNPQMW). Residues 532–586 (SLPPELPLSPEDSLSPPATSPSDSAGTSSASTDEDMETEAVNEILEDIPEHEEDY) form a disordered region. The span at 539–562 (LSPEDSLSPPATSPSDSAGTSSAS) shows a compositional bias: low complexity. The interval 550–598 (TSPSDSAGTSSASTDEDMETEAVNEILEDIPEHEEDYLDSTLEDEEIII) is NEDD8-binding 2. Positions 563–586 (TDEDMETEAVNEILEDIPEHEEDY) are enriched in acidic residues.

In terms of assembly, directly interacts with NEDD8 and PSMD4/S5a, a member of the regulatory subunit of the 26S proteasome. Isoform 1 binds to NEDD8 more efficiently than isoform 2. Interacts with AIPL1. The interaction with UBD via UBA domains facilitates the linking of UBD-conjugated target protein to the proteasome complex and accelerates UBD degradation and that of its conjugates. In terms of tissue distribution, widely expressed with lowest expression in the pancreas for isoform 1 and in leukocytes, liver, prostate and skeletal muscle for isoform 2.

It is found in the nucleus. Functionally, specific down-regulator of the NEDD8 conjugation system. Recruits NEDD8, UBD, and their conjugates to the proteasome for degradation. Isoform 1 promotes the degradation of NEDD8 more efficiently than isoform 2. The chain is NEDD8 ultimate buster 1 (NUB1) from Homo sapiens (Human).